Consider the following 441-residue polypeptide: Glutamate-1-semialdehyde 2,1-aminomutase (441 aa).

An N6-(pyridoxal phosphate)lysine modification is found at lysine 279.

It belongs to the class-III pyridoxal-phosphate-dependent aminotransferase family. HemL subfamily. In terms of assembly, homodimer. It depends on pyridoxal 5'-phosphate as a cofactor.

The protein localises to the cytoplasm. It catalyses the reaction (S)-4-amino-5-oxopentanoate = 5-aminolevulinate. It participates in porphyrin-containing compound metabolism; protoporphyrin-IX biosynthesis; 5-aminolevulinate from L-glutamyl-tRNA(Glu): step 2/2. The protein is Glutamate-1-semialdehyde 2,1-aminomutase of Leptospira borgpetersenii serovar Hardjo-bovis (strain JB197).